Here is a 370-residue protein sequence, read N- to C-terminus: Vasopressin V2 receptor (370 aa).

The tract at residues 1-28 is disordered; the sequence is MLRATTSAVPRALSWPAAPGNGSEREPL. The Extracellular portion of the chain corresponds to 1–37; that stretch reads MLRATTSAVPRALSWPAAPGNGSEREPLDDRDPLLAR. Asn21 carries an N-linked (GlcNAc...) asparagine glycan. A helical transmembrane segment spans residues 38–62; the sequence is VELALLSTVFVAVALSNGLVLGALV. The Cytoplasmic portion of the chain corresponds to 63–76; sequence RRGRRGRWAPMHVF. The helical transmembrane segment at 77–97 threads the bilayer; sequence IGHLCLADLAVALFQVLPQLA. At 98 to 112 the chain is on the extracellular side; the sequence is WDATYRFRGPDALCR. The helical transmembrane segment at 113–134 threads the bilayer; the sequence is AVKYLQMVGMYASSYMILAMTL. Residues 135 to 158 lie on the Cytoplasmic side of the membrane; that stretch reads DRHRAICRPMLAYRHGGGARWNRP. A helical membrane pass occupies residues 159–179; that stretch reads VLVAWAFSLLLSLPQLFIFAQ. The Extracellular portion of the chain corresponds to 180–199; that stretch reads RDVGDGSGVLDCWASFAEPW. The helical transmembrane segment at 200–219 threads the bilayer; that stretch reads GLRAYVTWIALMVFVAPALG. Topologically, residues 220 to 270 are cytoplasmic; it reads IAACQVLIFREIHTSLVPGPAERAGGHRGGRRAGSPREGARVSAAMAKTAR. A helical transmembrane segment spans residues 271–292; it reads MTLVIVAVYVLCWAPFFLVQLW. Residues 293–307 lie on the Extracellular side of the membrane; the sequence is SVWDPKAPREGPPFV. A helical membrane pass occupies residues 308 to 327; sequence LLMLLASLNSCTNPWIYASF. Over 328-370 the chain is Cytoplasmic; sequence SSSISSELRSLLCCPRRRTPPSLRPQEESCATASSFSARDTSS. 2 S-palmitoyl cysteine lipidation sites follow: Cys340 and Cys341. Residues 347 to 370 form a disordered region; the sequence is PPSLRPQEESCATASSFSARDTSS. Over residues 356 to 370 the composition is skewed to polar residues; the sequence is SCATASSFSARDTSS.

The protein belongs to the G-protein coupled receptor 1 family. Vasopressin/oxytocin receptor subfamily. Interacts with ARRDC4. Identified in a complex containing at least ARRDC4, V2R and HGS. Interacts with TMEM147.

Its subcellular location is the cell membrane. Receptor for arginine vasopressin. The activity of this receptor is mediated by G proteins which activate adenylate cyclase. Involved in renal water reabsorption. This chain is Vasopressin V2 receptor (AVPR2), found in Sus scrofa (Pig).